Consider the following 874-residue polypeptide: Alanine--tRNA ligase (874 aa).

His-562, His-566, Cys-664, and His-668 together coordinate Zn(2+).

Belongs to the class-II aminoacyl-tRNA synthetase family. Zn(2+) is required as a cofactor.

Its subcellular location is the cytoplasm. The catalysed reaction is tRNA(Ala) + L-alanine + ATP = L-alanyl-tRNA(Ala) + AMP + diphosphate. In terms of biological role, catalyzes the attachment of alanine to tRNA(Ala) in a two-step reaction: alanine is first activated by ATP to form Ala-AMP and then transferred to the acceptor end of tRNA(Ala). Also edits incorrectly charged Ser-tRNA(Ala) and Gly-tRNA(Ala) via its editing domain. In Shewanella denitrificans (strain OS217 / ATCC BAA-1090 / DSM 15013), this protein is Alanine--tRNA ligase.